Consider the following 430-residue polypeptide: Enolase (430 aa).

Q163 contributes to the (2R)-2-phosphoglycerate binding site. The active-site Proton donor is E205. Mg(2+) is bound by residues D242, E287, and D314. (2R)-2-phosphoglycerate is bound by residues K339, R368, S369, and K390. K339 (proton acceptor) is an active-site residue.

The protein belongs to the enolase family. Requires Mg(2+) as cofactor.

The protein resides in the cytoplasm. The protein localises to the secreted. Its subcellular location is the cell surface. The enzyme catalyses (2R)-2-phosphoglycerate = phosphoenolpyruvate + H2O. The protein operates within carbohydrate degradation; glycolysis; pyruvate from D-glyceraldehyde 3-phosphate: step 4/5. Functionally, catalyzes the reversible conversion of 2-phosphoglycerate (2-PG) into phosphoenolpyruvate (PEP). It is essential for the degradation of carbohydrates via glycolysis. This chain is Enolase, found in Geobacillus kaustophilus (strain HTA426).